Reading from the N-terminus, the 413-residue chain is Serine hydroxymethyltransferase (413 aa).

Residues L120 and 124–126 contribute to the (6S)-5,6,7,8-tetrahydrofolate site; that span reads GHL. Position 229 is an N6-(pyridoxal phosphate)lysine (K229). 352–354 provides a ligand contact to (6S)-5,6,7,8-tetrahydrofolate; sequence SPF.

Belongs to the SHMT family. In terms of assembly, homodimer. It depends on pyridoxal 5'-phosphate as a cofactor.

The protein localises to the cytoplasm. It catalyses the reaction (6R)-5,10-methylene-5,6,7,8-tetrahydrofolate + glycine + H2O = (6S)-5,6,7,8-tetrahydrofolate + L-serine. The protein operates within one-carbon metabolism; tetrahydrofolate interconversion. It functions in the pathway amino-acid biosynthesis; glycine biosynthesis; glycine from L-serine: step 1/1. Its function is as follows. Catalyzes the reversible interconversion of serine and glycine with tetrahydrofolate (THF) serving as the one-carbon carrier. This reaction serves as the major source of one-carbon groups required for the biosynthesis of purines, thymidylate, methionine, and other important biomolecules. Also exhibits THF-independent aldolase activity toward beta-hydroxyamino acids, producing glycine and aldehydes, via a retro-aldol mechanism. The chain is Serine hydroxymethyltransferase from Heliobacterium modesticaldum (strain ATCC 51547 / Ice1).